The chain runs to 348 residues: Inactive rhomboid-related protein 2 (348 aa).

Residues 14 to 49 (IEASSWIRIFRAFDTDHDGLIQCEEMQKTIRDSTYS) enclose the EF-hand domain. Ca(2+) contacts are provided by D27, D29, D31, and E38. The next 7 helical transmembrane spans lie at 121–141 (PPIFLIFLSIVQLAFYLYYVV), 177–197 (LINVGIFHIIFNILIQLAIGV), 207–227 (IYILYFMGVLFGSILSLALDP), 229–249 (VFLCGGAAGSFSLIASHITTI), 263–283 (LPILIVFAALDYVLAVYQRFF), 290–310 (VSMYGHLGGLVAGILFTFILF), and 323–343 (FWVSLVLSGFFIAICITLIAA).

It belongs to the peptidase S54 family.

The protein resides in the membrane. Probable inactive serine protease. This chain is Inactive rhomboid-related protein 2, found in Caenorhabditis elegans.